Reading from the N-terminus, the 1007-residue chain is Glutamate receptor ionotropic, delta-2 (1007 aa).

Residues 1–23 form the signal peptide; that stretch reads MEVFPLLFFLSFWWSRTWDLATS. An interaction with CBLN1 homotrimer region spans residues 24–345; it reads DSIIHIGAIF…NAFHKKLEDR (322 aa). Over 24–566 the chain is Extracellular; it reads DSIIHIGAIF…DMFACLAPFD (543 aa). Intrachain disulfides connect cysteine 83-cysteine 355, cysteine 99-cysteine 131, and cysteine 298-cysteine 310. Asparagine 293 carries N-linked (GlcNAc...) asparagine glycosylation. Residue asparagine 426 is glycosylated (N-linked (GlcNAc...) asparagine). Residues 567-587 form a helical membrane-spanning segment; sequence LSLWACIAGTVLLVGLLVYLL. The Cytoplasmic portion of the chain corresponds to 588–635; the sequence is NWLNPPRLQMGSMTSTTLYNSMWFVYGSFVQQGGEVPYTTLATRMMMG. The chain crosses the membrane as a helical span at residues 636–656; that stretch reads AWWLFALIVISSYTANLAAFL. Residues 657 to 830 lie on the Extracellular side of the membrane; that stretch reads TITRIESSIQ…QKGGALDIKS (174 aa). Residues asparagine 713 and asparagine 716 are each glycosylated (N-linked (GlcNAc...) asparagine). The chain crosses the membrane as a helical span at residues 831 to 851; that stretch reads LAGVFCILAAGIVLSCLIAVL. Residues 852-1007 lie on the Cytoplasmic side of the membrane; the sequence is ETWWSRRKGS…GNDPDRGTSI (156 aa). Residue serine 883 is modified to Phosphoserine. Threonine 886 carries the phosphothreonine modification. Serine 890 is subject to Phosphoserine. The interaction with AP4M1 stretch occupies residues 921–991; sequence DFRNTHITTT…MSSIPYQPTP (71 aa). Positions 1005-1007 match the PDZ-binding motif; that stretch reads TSI. A Phosphoserine modification is found at serine 1006.

This sequence belongs to the glutamate-gated ion channel (TC 1.A.10.1) family. GRID2 subfamily. In terms of assembly, tetramer; dimer of dimers. Interacts with AP4M1. Interacts with EML2. Interacts with MAGI2 (via PDZ domains). Interacts with BECN1, GOPC, GRID2IP, SHANK1 and SHANK2. Interacts with CBLN2, but not with CBLN4. Interacts with CBLN1 (via C1q domain); the interaction is CBLN1-NRX1 complex formation-dependent; CBLN1-binding is calcium-independent; CBLN1 hexamers anchor GRID2 N-terminal domain dimers to monomeric NRXN1 isoform beta; promotes synaptogenesis and mediates the D-Serine-dependent long term depression signals and AMPA receptor endocytosis. Expressed at high levels in the cerebellar Purkinje cell layer, almost absent in the forebrain.

Its subcellular location is the postsynaptic cell membrane. It carries out the reaction Ca(2+)(in) = Ca(2+)(out). The enzyme catalyses Na(+)(in) = Na(+)(out). Member of the ionotropic glutamate receptor family, which plays a crucial role in synaptic organization and signal transduction in the central nervous system. Although it shares structural features with ionotropic glutamate receptors, does not bind glutamate as a primary ligand. Promotes synaptogenesis and mediates the D-Serine-dependent long term depression signals and AMPA receptor endocytosis of cerebellar parallel fiber-Purkinje cell (PF-PC) synapses through the NRX1B-CBLN1-GRID2 triad complex. In the presence of neurexins and cerebellins, forms cation-selective channels that are proposed to be gated by glycine and D-serine. However, recent research disputes this ligand-gated cation channel activity. Cation-selective ion channel activity can be triggered by GRM1 in Purkinje cells. The protein is Glutamate receptor ionotropic, delta-2 (Grid2) of Rattus norvegicus (Rat).